The chain runs to 107 residues: Thiosulfate sulfurtransferase GlpE (107 aa).

Residues 19-107 (QDLNAVLVDI…WHKAGLPVEK (89 aa)) form the Rhodanese domain. C67 serves as the catalytic Cysteine persulfide intermediate.

Belongs to the GlpE family.

It localises to the cytoplasm. It carries out the reaction thiosulfate + hydrogen cyanide = thiocyanate + sulfite + 2 H(+). The enzyme catalyses thiosulfate + [thioredoxin]-dithiol = [thioredoxin]-disulfide + hydrogen sulfide + sulfite + 2 H(+). In terms of biological role, transferase that catalyzes the transfer of sulfur from thiosulfate to thiophilic acceptors such as cyanide or dithiols. May function in a CysM-independent thiosulfate assimilation pathway by catalyzing the conversion of thiosulfate to sulfite, which can then be used for L-cysteine biosynthesis. In Aliivibrio fischeri (strain MJ11) (Vibrio fischeri), this protein is Thiosulfate sulfurtransferase GlpE.